Reading from the N-terminus, the 218-residue chain is Putative glutamine transport system permease protein GlnP (218 aa).

One can recognise an ABC transmembrane type-1 domain in the interval 19–208 (TLVTLKYSVI…ILVMLISFIA (190 aa)). 4 consecutive transmembrane segments (helical) span residues 25–45 (YSVI…ICKV), 57–79 (FYTS…FASP), 86–108 (FSVF…SEVI), and 187–207 (FFPM…ISFI).

The protein belongs to the binding-protein-dependent transport system permease family. HisMQ subfamily.

The protein resides in the cell inner membrane. Its function is as follows. Part of the binding-protein-dependent transport system for glutamine; probably responsible for the translocation of the substrate across the membrane. This is Putative glutamine transport system permease protein GlnP (glnP) from Rickettsia conorii (strain ATCC VR-613 / Malish 7).